A 363-amino-acid chain; its full sequence is Phospho-N-acetylmuramoyl-pentapeptide-transferase (363 aa).

The next 10 membrane-spanning stretches (helical) occupy residues 15-33 (FTTL…SFIF), 82-102 (NTPT…LLIV), 106-126 (FYSM…IIGF), 147-167 (FILQ…NGYI), 183-203 (IVIF…VNLT), 207-227 (DGLA…EIFI), 233-253 (LIIY…FLKF), 260-280 (IFMG…ISIL), 285-305 (FTLF…IIQV), and 341-361 (IVEN…VLKI).

Belongs to the glycosyltransferase 4 family. MraY subfamily. Mg(2+) is required as a cofactor.

The protein localises to the cell inner membrane. The catalysed reaction is UDP-N-acetyl-alpha-D-muramoyl-L-alanyl-gamma-D-glutamyl-meso-2,6-diaminopimeloyl-D-alanyl-D-alanine + di-trans,octa-cis-undecaprenyl phosphate = di-trans,octa-cis-undecaprenyl diphospho-N-acetyl-alpha-D-muramoyl-L-alanyl-D-glutamyl-meso-2,6-diaminopimeloyl-D-alanyl-D-alanine + UMP. It functions in the pathway cell wall biogenesis; peptidoglycan biosynthesis. Its function is as follows. Catalyzes the initial step of the lipid cycle reactions in the biosynthesis of the cell wall peptidoglycan: transfers peptidoglycan precursor phospho-MurNAc-pentapeptide from UDP-MurNAc-pentapeptide onto the lipid carrier undecaprenyl phosphate, yielding undecaprenyl-pyrophosphoryl-MurNAc-pentapeptide, known as lipid I. The protein is Phospho-N-acetylmuramoyl-pentapeptide-transferase of Prochlorococcus marinus (strain MIT 9515).